The primary structure comprises 1336 residues: pre-mRNA 3' end processing protein WDR33 (1336 aa).

Ala-2 carries the post-translational modification N-acetylalanine. Ser-7 is subject to Phosphoserine. N6-acetyllysine is present on Lys-46. WD repeat units follow at residues 117-156 (KVKC…FETI), 159-198 (AHDS…VKMF), 200-239 (AHKE…EERI), 242-283 (GHGA…SLAT), 286-325 (AHKN…EELQ), 329-369 (GHKK…EVGG), and 373-412 (AHEG…DKMR). Residues Lys-526, Lys-530, and Lys-560 each participate in a glycyl lysine isopeptide (Lys-Gly) (interchain with G-Cter in SUMO2) cross-link. The interval 568–1336 (QVEQIQPPPS…GASRGGGRGR (769 aa)) is disordered. The segment covering 573–590 (QPPPSSGTPLLGPQPFPG) has biased composition (pro residues). Residues 594–607 (MSQIPQGFQQPHPS) show a composition bias toward polar residues. Over residues 608–643 (QQMPMNMAQMGPPGPQGQFRPPGPQGQMGPQGPPLH) the composition is skewed to low complexity. The Collagen-like domain occupies 618–770 (GPPGPQGQFR…GPGSQGIQGP (153 aa)). Pro residues predominate over residues 683 to 695 (PHGPLGPQGPPGP). Low complexity-rich tracts occupy residues 696–707 (QGSSGPQGHMGP) and 726–751 (QGHL…GMQG). At Arg-782 the chain carries Omega-N-methylarginine. A compositionally biased stretch (low complexity) spans 854–869 (GPPGSQSQQGPPQGSL). Residue Arg-915 is modified to Asymmetric dimethylarginine. Low complexity predominate over residues 932–941 (PGLGQQGAQG). 2 stretches are compositionally biased toward basic and acidic residues: residues 971–989 (SERR…ERGP) and 998–1034 (GPPD…EFEG). Omega-N-methylarginine is present on Arg-987. Arg-1035 carries the omega-N-methylarginine modification. Basic and acidic residues-rich tracts occupy residues 1056 to 1068 (PDHR…DGRG) and 1078 to 1122 (EGRR…RGRD). Positions 1130–1140 (FGPEENFDASE) are enriched in acidic residues. Residues 1141-1150 (EAARGRDLRG) are compositionally biased toward basic and acidic residues. The segment covering 1151–1160 (RGRGTPRGGR) has biased composition (basic residues). 2 stretches are compositionally biased toward basic and acidic residues: residues 1169 to 1217 (EFPR…RERS) and 1242 to 1259 (SEHR…DRGG). A Phosphoserine modification is found at Ser-1210. Residue Arg-1262 is modified to Omega-N-methylarginine. Positions 1281–1293 (DGEHHDGYHRDEP) are enriched in basic and acidic residues. The span at 1301 to 1326 (GTPSRGGRSGSNWGRGSNMNSGPPRR) shows a compositional bias: low complexity. Arg-1315 carries the asymmetric dimethylarginine; alternate modification. Arg-1315 is modified (omega-N-methylarginine; alternate).

The protein belongs to the WD repeat WDR33 family. Component of the cleavage and polyadenylation specificity factor (CPSF) module of the pre-mRNA 3'-end processing complex. Interacts with CPSF3/CPSF73. In terms of tissue distribution, most highly expressed in testis.

It is found in the nucleus. Essential for both cleavage and polyadenylation of pre-mRNA 3' ends. The sequence is that of pre-mRNA 3' end processing protein WDR33 (WDR33) from Homo sapiens (Human).